The primary structure comprises 387 residues: Succinyl-diaminopimelate desuccinylase (387 aa).

Histidine 74 contacts Zn(2+). Aspartate 76 is a catalytic residue. Aspartate 107 lines the Zn(2+) pocket. The Proton acceptor role is filled by glutamate 142. Glutamate 143, glutamate 171, and histidine 360 together coordinate Zn(2+).

This sequence belongs to the peptidase M20A family. DapE subfamily. As to quaternary structure, homodimer. Requires Zn(2+) as cofactor. It depends on Co(2+) as a cofactor.

The catalysed reaction is N-succinyl-(2S,6S)-2,6-diaminopimelate + H2O = (2S,6S)-2,6-diaminopimelate + succinate. Its pathway is amino-acid biosynthesis; L-lysine biosynthesis via DAP pathway; LL-2,6-diaminopimelate from (S)-tetrahydrodipicolinate (succinylase route): step 3/3. In terms of biological role, catalyzes the hydrolysis of N-succinyl-L,L-diaminopimelic acid (SDAP), forming succinate and LL-2,6-diaminopimelate (DAP), an intermediate involved in the bacterial biosynthesis of lysine and meso-diaminopimelic acid, an essential component of bacterial cell walls. In Rhodopseudomonas palustris (strain TIE-1), this protein is Succinyl-diaminopimelate desuccinylase.